Here is a 112-residue protein sequence, read N- to C-terminus: Putative membrane protein insertion efficiency factor (112 aa).

It belongs to the UPF0161 family.

It is found in the cell inner membrane. In terms of biological role, could be involved in insertion of integral membrane proteins into the membrane. The chain is Putative membrane protein insertion efficiency factor from Bradyrhizobium diazoefficiens (strain JCM 10833 / BCRC 13528 / IAM 13628 / NBRC 14792 / USDA 110).